The primary structure comprises 348 residues: Cell surface glycoprotein CD200 receptor 1 (348 aa).

The N-terminal stretch at Met1–Ala24 is a signal peptide. Residues Gln29 to Lys265 are Extracellular-facing. Asn31, Asn60, Asn69, Asn116, Asn122, Asn185, Asn218, Asn233, and Asn247 each carry an N-linked (GlcNAc...) asparagine glycan. 2 disulfide bridges follow: Cys83-Cys155 and Cys107-Cys123. The Ig-like C2-type domain maps to Pro160–Tyr251. 2 cysteine pairs are disulfide-bonded: Cys190/Cys239 and Cys209/Cys227. Residues Leu266 to Leu286 traverse the membrane as a helical segment. Topologically, residues Leu287–Leu348 are cytoplasmic.

The protein belongs to the CD200R family. In terms of assembly, CD200 and CD200R1 interact via their respective N-terminal Ig-like domains. Interacts with Human herpesvirus 8 vOX2 protein. (Microbial infection) Interacts with human herpesvirus 8/HHV-8 protein vOX2/K14. Expressed in granulocytes, monocytes, most T-cells, neutrophils, basophils and a subset of NK, NKT and B-cells (at protein level). Expressed in bone marrow, lymph nodes, spleen, lung, liver, spinal cord, kidney. Expressed in monocyte-derived dendritic and mast cells.

The protein localises to the cell membrane. Its subcellular location is the secreted. Functionally, inhibitory receptor for the CD200/OX2 cell surface glycoprotein. Limits inflammation by inhibiting the expression of pro-inflammatory molecules including TNF-alpha, interferons, and inducible nitric oxide synthase (iNOS) in response to selected stimuli. Also binds to HHV-8 K14 viral CD200 homolog with identical affinity and kinetics as the host CD200. The polypeptide is Cell surface glycoprotein CD200 receptor 1 (CD200R1) (Homo sapiens (Human)).